A 1051-amino-acid chain; its full sequence is Carbamoyl phosphate synthase large chain (1051 aa).

Residues 1–399 (MRETPKKVLV…SLQKAIRMLD (399 aa)) are carboxyphosphate synthetic domain. Residues arginine 127, arginine 167, glycine 173, glycine 174, lysine 206, leucine 208, glutamate 213, glycine 239, valine 240, histidine 241, glutamine 282, and glutamate 296 each contribute to the ATP site. In terms of domain architecture, ATP-grasp 1 spans 131-325 (RETMIENNLP…LAYVSAKLAL (195 aa)). Positions 282, 296, and 298 each coordinate Mg(2+). Mn(2+) is bound by residues glutamine 282, glutamate 296, and asparagine 298. The tract at residues 400-548 (IGEPGVVGGK…LTYNGTEDDI (149 aa)) is oligomerization domain. A carbamoyl phosphate synthetic domain region spans residues 549–930 (EFSQGNKLLI…LKSWLSSMPN (382 aa)). Residues 673-863 (SKLLDKLGIS…LINESMKAIF (191 aa)) enclose the ATP-grasp 2 domain. Positions 709, 748, 750, 755, 779, 780, 781, 782, 822, and 834 each coordinate ATP. 3 residues coordinate Mg(2+): glutamine 822, glutamate 834, and asparagine 836. Residues glutamine 822, glutamate 834, and asparagine 836 each contribute to the Mn(2+) site. The 122-residue stretch at 930 to 1051 (NRIPNKNGIA…FEISEYGGGI (122 aa)) folds into the MGS-like domain. The segment at 931–1051 (RIPNKNGIAL…FEISEYGGGI (121 aa)) is allosteric domain.

It belongs to the CarB family. As to quaternary structure, composed of two chains; the small (or glutamine) chain promotes the hydrolysis of glutamine to ammonia, which is used by the large (or ammonia) chain to synthesize carbamoyl phosphate. Tetramer of heterodimers (alpha,beta)4. The cofactor is Mg(2+). Mn(2+) serves as cofactor.

The catalysed reaction is hydrogencarbonate + L-glutamine + 2 ATP + H2O = carbamoyl phosphate + L-glutamate + 2 ADP + phosphate + 2 H(+). It catalyses the reaction hydrogencarbonate + NH4(+) + 2 ATP = carbamoyl phosphate + 2 ADP + phosphate + 2 H(+). It participates in amino-acid biosynthesis; L-arginine biosynthesis; carbamoyl phosphate from bicarbonate: step 1/1. It functions in the pathway pyrimidine metabolism; UMP biosynthesis via de novo pathway; (S)-dihydroorotate from bicarbonate: step 1/3. Functionally, large subunit of the glutamine-dependent carbamoyl phosphate synthetase (CPSase). CPSase catalyzes the formation of carbamoyl phosphate from the ammonia moiety of glutamine, carbonate, and phosphate donated by ATP, constituting the first step of 2 biosynthetic pathways, one leading to arginine and/or urea and the other to pyrimidine nucleotides. The large subunit (synthetase) binds the substrates ammonia (free or transferred from glutamine from the small subunit), hydrogencarbonate and ATP and carries out an ATP-coupled ligase reaction, activating hydrogencarbonate by forming carboxy phosphate which reacts with ammonia to form carbamoyl phosphate. The protein is Carbamoyl phosphate synthase large chain of Saccharolobus solfataricus (strain ATCC 35092 / DSM 1617 / JCM 11322 / P2) (Sulfolobus solfataricus).